Reading from the N-terminus, the 68-residue chain is Lividin-1 (68 aa).

The signal sequence occupies residues 1–22 (MFTLKKSLLLLFFLGTINLSLC). A propeptide spanning residues 23 to 42 (QEERNADEEERRDERNVEVE) is cleaved from the precursor. C62 and C68 form a disulfide bridge.

In terms of tissue distribution, expressed by the skin glands.

The protein resides in the secreted. Its function is as follows. Antimicrobial peptide. This is Lividin-1 from Odorrana livida (Green mountain frog).